The primary structure comprises 649 residues: Replication factor C small subunit (649 aa).

55–385 (GPAGVGKCVT…GCIPTVMHNT (331 aa)) serves as a coordination point for ATP.

Belongs to the activator 1 small subunits family. RfcS subfamily. In terms of assembly, heteromultimer composed of small subunits (RfcS) and large subunits (RfcL). This protein undergoes a protein self splicing that involves a post-translational excision of the intervening region (intein) followed by peptide ligation.

Part of the RFC clamp loader complex which loads the PCNA sliding clamp onto DNA. The polypeptide is Replication factor C small subunit (rfcS) (Haloquadratum walsbyi (strain DSM 16790 / HBSQ001)).